The chain runs to 493 residues: Chitobiosyldiphosphodolichol beta-mannosyltransferase (493 aa).

Residues Met-1–Lys-71 lie on the Lumenal side of the membrane. The chain crosses the membrane as a helical span at residues Ile-72–Ile-92. The Cytoplasmic portion of the chain corresponds to Ile-93–Thr-109. Positions Ile-110–Ile-130 form an intramembrane region, helical. The Cytoplasmic segment spans residues Arg-131 to Asp-493. The tract at residues Phe-462–Asp-493 is disordered. Residues Ser-465–Asp-493 show a composition bias toward low complexity.

The protein belongs to the glycosyltransferase group 1 family. Glycosyltransferase 33 subfamily.

It is found in the endoplasmic reticulum membrane. The enzyme catalyses an N,N'-diacetylchitobiosyl-diphospho-di-trans,poly-cis-dolichol + GDP-alpha-D-mannose = a beta-D-Man-(1-&gt;4)-beta-D-GlcNAc-(1-&gt;4)-alpha-D-GlcNAc-diphospho-di-trans,poly-cis-dolichol + GDP + H(+). It participates in protein modification; protein glycosylation. Functionally, participates in the formation of the lipid-linked precursor oligosaccharide for N-glycosylation. Involved in assembling the dolichol-pyrophosphate-GlcNAc(2)-Man(5) intermediate on the cytoplasmic surface of the ER. This Dictyostelium discoideum (Social amoeba) protein is Chitobiosyldiphosphodolichol beta-mannosyltransferase (alg1).